Here is a 415-residue protein sequence, read N- to C-terminus: Lipoyl synthase, mitochondrial (415 aa).

The transit peptide at 1 to 32 directs the protein to the mitochondrion; sequence MAVSTSHFRSLCASSRSLSRTGIVAPISCRGY. A disordered region spans residues 30–50; it reads RGYATTEPSPSATSTTTTTTA. Residues 33 to 49 are compositionally biased toward low complexity; that stretch reads ATTEPSPSATSTTTTTT. 7 residues coordinate [4Fe-4S] cluster: C132, C137, C143, C163, C167, C170, and S378. The region spanning 146-367 is the Radical SAM core domain; it reads GSDKSAATAT…RQRALDMGFL (222 aa).

This sequence belongs to the radical SAM superfamily. Lipoyl synthase family. [4Fe-4S] cluster is required as a cofactor.

It localises to the mitochondrion. The enzyme catalyses [[Fe-S] cluster scaffold protein carrying a second [4Fe-4S](2+) cluster] + N(6)-octanoyl-L-lysyl-[protein] + 2 oxidized [2Fe-2S]-[ferredoxin] + 2 S-adenosyl-L-methionine + 4 H(+) = [[Fe-S] cluster scaffold protein] + N(6)-[(R)-dihydrolipoyl]-L-lysyl-[protein] + 4 Fe(3+) + 2 hydrogen sulfide + 2 5'-deoxyadenosine + 2 L-methionine + 2 reduced [2Fe-2S]-[ferredoxin]. The protein operates within protein modification; protein lipoylation via endogenous pathway; protein N(6)-(lipoyl)lysine from octanoyl-[acyl-carrier-protein]: step 2/2. Catalyzes the radical-mediated insertion of two sulfur atoms into the C-6 and C-8 positions of the octanoyl moiety bound to the lipoyl domains of lipoate-dependent enzymes, thereby converting the octanoylated domains into lipoylated derivatives. The protein is Lipoyl synthase, mitochondrial of Neosartorya fischeri (strain ATCC 1020 / DSM 3700 / CBS 544.65 / FGSC A1164 / JCM 1740 / NRRL 181 / WB 181) (Aspergillus fischerianus).